The chain runs to 195 residues: Large ribosomal subunit protein eL18 (195 aa).

Lys126 is covalently cross-linked (Glycyl lysine isopeptide (Lys-Gly) (interchain with G-Cter in SUMO2)). At Ser137 the chain carries Phosphoserine. Positions 158-195 (HFGKAPGTPHSHTKPYVRSKGRKFERARGRRASRGYKN) are disordered. Thr165 is subject to Phosphothreonine. Basic residues-rich tracts occupy residues 168 to 178 (SHTKPYVRSKG) and 185 to 195 (RGRRASRGYKN). Lys171 participates in a covalent cross-link: Glycyl lysine isopeptide (Lys-Gly) (interchain with G-Cter in SUMO2).

The protein belongs to the eukaryotic ribosomal protein eL18 family. Component of the large ribosomal subunit.

It is found in the cytoplasm. The protein localises to the cytosol. It localises to the rough endoplasmic reticulum. In terms of biological role, component of the large ribosomal subunit. The chain is Large ribosomal subunit protein eL18 (RPL18) from Sus scrofa (Pig).